The primary structure comprises 285 residues: Probable endonuclease 4 (285 aa).

Residues His-69, His-109, Glu-145, Asp-179, His-182, His-216, Asp-229, His-231, and Glu-261 each contribute to the Zn(2+) site.

The protein belongs to the AP endonuclease 2 family. It depends on Zn(2+) as a cofactor.

It carries out the reaction Endonucleolytic cleavage to 5'-phosphooligonucleotide end-products.. Its function is as follows. Endonuclease IV plays a role in DNA repair. It cleaves phosphodiester bonds at apurinic or apyrimidinic (AP) sites, generating a 3'-hydroxyl group and a 5'-terminal sugar phosphate. The chain is Probable endonuclease 4 from Shigella boydii serotype 4 (strain Sb227).